The primary structure comprises 313 residues: Probable cell division protein WhiA (313 aa).

Residues 274-308 constitute a DNA-binding region (H-T-H motif); sequence SLKELGELVPGGPISKSGVNHRLRKLNAYADELRA.

The protein belongs to the WhiA family.

Its function is as follows. Involved in cell division and chromosome segregation. The chain is Probable cell division protein WhiA from Limosilactobacillus reuteri subsp. reuteri (strain JCM 1112) (Lactobacillus reuteri).